A 325-amino-acid polypeptide reads, in one-letter code: GMP reductase (325 aa).

Cys-173 (thioimidate intermediate) is an active-site residue. 202 to 225 provides a ligand contact to NADP(+); it reads IIADGGIRSHGDIAKSVRFGATMV.

This sequence belongs to the IMPDH/GMPR family. GuaC type 2 subfamily.

It catalyses the reaction IMP + NH4(+) + NADP(+) = GMP + NADPH + 2 H(+). Its function is as follows. Catalyzes the irreversible NADPH-dependent deamination of GMP to IMP. It functions in the conversion of nucleobase, nucleoside and nucleotide derivatives of G to A nucleotides, and in maintaining the intracellular balance of A and G nucleotides. This chain is GMP reductase, found in Acidovorax sp. (strain JS42).